Here is a 782-residue protein sequence, read N- to C-terminus: Cleavage and polyadenylation specificity factor subunit 2 (782 aa).

Residues 407–416 (KKLEQSKEAD) are compositionally biased toward basic and acidic residues. The segment at 407–449 (KKLEQSKEADIDSSDESDIEEDIDQPSAHKTKHDLMMKGEGSR) is disordered. Acidic residues predominate over residues 417–430 (IDSSDESDIEEDID). Residues S419, S420, and S423 each carry the phosphoserine modification. The span at 439-449 (HDLMMKGEGSR) shows a compositional bias: basic and acidic residues. S660 carries the phosphoserine modification.

It belongs to the metallo-beta-lactamase superfamily. RNA-metabolizing metallo-beta-lactamase-like family. CPSF2/YSH1 subfamily. As to quaternary structure, component of the cleavage and polyadenylation specificity factor (CPSF) complex, composed of CPSF1, CPSF2, CPSF3, CPSF4 and FIP1L1. Interacts with CPSF3, CSTF2 and SYMPK. Interacts with ZC3H3.

The protein resides in the nucleus. Component of the cleavage and polyadenylation specificity factor (CPSF) complex that play a key role in pre-mRNA 3'-end formation, recognizing the AAUAAA signal sequence and interacting with poly(A) polymerase and other factors to bring about cleavage and poly(A) addition. Involved in the histone 3' end pre-mRNA processing. In Homo sapiens (Human), this protein is Cleavage and polyadenylation specificity factor subunit 2 (CPSF2).